The sequence spans 288 residues: Octanoyl-[GcvH]:protein N-octanoyltransferase (288 aa).

The BPL/LPL catalytic domain occupies 44–253; sequence AGGPPTFRLW…VLESAMGPQV (210 aa). The Acyl-thioester intermediate role is filled by Cys-148. Positions 269–288 are disordered; sequence GREGASETDPRRVAYGVDRP. Over residues 272-288 the composition is skewed to basic and acidic residues; it reads GASETDPRRVAYGVDRP.

This sequence belongs to the octanoyltransferase LipL family.

It catalyses the reaction N(6)-octanoyl-L-lysyl-[glycine-cleavage complex H protein] + L-lysyl-[lipoyl-carrier protein] = N(6)-octanoyl-L-lysyl-[lipoyl-carrier protein] + L-lysyl-[glycine-cleavage complex H protein]. The protein operates within protein modification; protein lipoylation via endogenous pathway; protein N(6)-(lipoyl)lysine from octanoyl-[acyl-carrier-protein]. Its function is as follows. Catalyzes the amidotransfer (transamidation) of the octanoyl moiety from octanoyl-GcvH to the lipoyl domain of the E2 subunit of lipoate-dependent enzymes. This is Octanoyl-[GcvH]:protein N-octanoyltransferase from Kyrpidia tusciae (strain DSM 2912 / NBRC 15312 / T2) (Bacillus tusciae).